We begin with the raw amino-acid sequence, 353 residues long: Phospho-N-acetylmuramoyl-pentapeptide-transferase (353 aa).

The next 10 helical transmembrane spans lie at 24 to 44 (LGFF…ILWA), 66 to 86 (TPTM…VLCA), 88 to 108 (LSNL…FVGF), 129 to 149 (FGML…KGLD), 160 to 180 (PLFE…FLST), 192 to 212 (GLAS…VYVA), 229 to 249 (VGEL…FLWY), 256 to 276 (VFMG…NAIV), 281 to 301 (ILLV…ILQV), and 330 to 350 (KVIV…LLSL).

It belongs to the glycosyltransferase 4 family. MraY subfamily. It depends on Mg(2+) as a cofactor.

The protein resides in the cell inner membrane. It carries out the reaction UDP-N-acetyl-alpha-D-muramoyl-L-alanyl-gamma-D-glutamyl-meso-2,6-diaminopimeloyl-D-alanyl-D-alanine + di-trans,octa-cis-undecaprenyl phosphate = di-trans,octa-cis-undecaprenyl diphospho-N-acetyl-alpha-D-muramoyl-L-alanyl-D-glutamyl-meso-2,6-diaminopimeloyl-D-alanyl-D-alanine + UMP. It participates in cell wall biogenesis; peptidoglycan biosynthesis. Catalyzes the initial step of the lipid cycle reactions in the biosynthesis of the cell wall peptidoglycan: transfers peptidoglycan precursor phospho-MurNAc-pentapeptide from UDP-MurNAc-pentapeptide onto the lipid carrier undecaprenyl phosphate, yielding undecaprenyl-pyrophosphoryl-MurNAc-pentapeptide, known as lipid I. The sequence is that of Phospho-N-acetylmuramoyl-pentapeptide-transferase from Helicobacter pylori (strain J99 / ATCC 700824) (Campylobacter pylori J99).